The following is a 350-amino-acid chain: uncharacterized protein (350 aa).

This is an uncharacterized protein from Methanocaldococcus jannaschii (strain ATCC 43067 / DSM 2661 / JAL-1 / JCM 10045 / NBRC 100440) (Methanococcus jannaschii).